We begin with the raw amino-acid sequence, 417 residues long: Serine--tRNA ligase (417 aa).

L-serine is bound at residue 226–228 (TSE). Residues 257–259 (RRE) and Val-273 contribute to the ATP site. An L-serine-binding site is contributed by Glu-280. Residue 344–347 (ELTS) participates in ATP binding. Thr-379 contributes to the L-serine binding site.

Belongs to the class-II aminoacyl-tRNA synthetase family. Type-1 seryl-tRNA synthetase subfamily. In terms of assembly, homodimer. The tRNA molecule binds across the dimer.

The protein resides in the cytoplasm. The enzyme catalyses tRNA(Ser) + L-serine + ATP = L-seryl-tRNA(Ser) + AMP + diphosphate + H(+). It carries out the reaction tRNA(Sec) + L-serine + ATP = L-seryl-tRNA(Sec) + AMP + diphosphate + H(+). It functions in the pathway aminoacyl-tRNA biosynthesis; selenocysteinyl-tRNA(Sec) biosynthesis; L-seryl-tRNA(Sec) from L-serine and tRNA(Sec): step 1/1. Functionally, catalyzes the attachment of serine to tRNA(Ser). Is also able to aminoacylate tRNA(Sec) with serine, to form the misacylated tRNA L-seryl-tRNA(Sec), which will be further converted into selenocysteinyl-tRNA(Sec). This chain is Serine--tRNA ligase, found in Mycobacterium sp. (strain JLS).